The sequence spans 110 residues: Nucleoid-associated protein YE3092 (110 aa).

Belongs to the YbaB/EbfC family. As to quaternary structure, homodimer.

Its subcellular location is the cytoplasm. The protein resides in the nucleoid. Functionally, binds to DNA and alters its conformation. May be involved in regulation of gene expression, nucleoid organization and DNA protection. This Yersinia enterocolitica serotype O:8 / biotype 1B (strain NCTC 13174 / 8081) protein is Nucleoid-associated protein YE3092.